We begin with the raw amino-acid sequence, 198 residues long: Probable nicotinate-nucleotide adenylyltransferase (198 aa).

It belongs to the NadD family.

The catalysed reaction is nicotinate beta-D-ribonucleotide + ATP + H(+) = deamido-NAD(+) + diphosphate. The protein operates within cofactor biosynthesis; NAD(+) biosynthesis; deamido-NAD(+) from nicotinate D-ribonucleotide: step 1/1. Its function is as follows. Catalyzes the reversible adenylation of nicotinate mononucleotide (NaMN) to nicotinic acid adenine dinucleotide (NaAD). The protein is Probable nicotinate-nucleotide adenylyltransferase of Albidiferax ferrireducens (strain ATCC BAA-621 / DSM 15236 / T118) (Rhodoferax ferrireducens).